The following is a 534-amino-acid chain: Protein TIC 62, chloroplastic (534 aa).

A chloroplast-targeting transit peptide spans 1-64 (MPMEVFSLTS…SSSSSSSSIR (64 aa)). A disordered region spans residues 50 to 83 (NNRIRSSSSSSSSIRAQASGSTKSSTAEGIPEKT). Residues 63 to 76 (IRAQASGSTKSSTA) are compositionally biased toward polar residues. 91-120 (VFVAGATGKVGSRTVRELIKLGFKVRAGVR) serves as a coordination point for NADP(+). The tract at residues 334 to 534 (PSQRPYIPSP…ASPSPSFRKS (201 aa)) is disordered. A compositionally biased stretch (polar residues) spans 350 to 360 (DTATVSNTGPS). Repeat 1 spans residues 387 to 408 (PLSPYTAYDDLKPPSSPSPTKP). The 3 X 22 AA approximate repeats stretch occupies residues 387 to 532 (PLSPYTAYDD…PPASPSPSFR (146 aa)). Positions 421–432 (PTPISSDTPSSI) are enriched in low complexity. The stretch at 450-471 (SLSPYAAYPDLKPPSSPSPSVP) is repeat 2. A compositionally biased stretch (pro residues) spans 460-469 (LKPPSSPSPS). A compositionally biased stretch (basic and acidic residues) spans 495-509 (DTPKNEEQHLHEPKS). Repeat unit 3 spans residues 511–532 (PLSPYAMYEDLKPPASPSPSFR).

Part of the Tic complex. Interacts with TIC40, TIC110 and TIC55. Interacts (via C-terminus) with PETH/FNR.

The protein resides in the plastid. Its subcellular location is the chloroplast inner membrane. It localises to the chloroplast stroma. Its function is as follows. Involved in protein precursor import into chloroplasts. Part of the redox regulon consisting of TIC32, TIC 55 and TIC62. Has a NADPH-dependent dehydrogenase activity, but only after preincubation with lipids. This is Protein TIC 62, chloroplastic (TIC62) from Pisum sativum (Garden pea).